Consider the following 251-residue polypeptide: NADH-quinone oxidoreductase subunit B (251 aa).

Cysteine 38, cysteine 39, cysteine 104, and cysteine 134 together coordinate [4Fe-4S] cluster. A disordered region spans residues 208–251 (RKGLPPGSMTDVGWIPPEARERLKAGRGAGASGSGEREEGKEGA). Positions 242–251 (GEREEGKEGA) are enriched in basic and acidic residues.

Belongs to the complex I 20 kDa subunit family. NDH-1 is composed of 14 different subunits. Subunits NuoB, C, D, E, F, and G constitute the peripheral sector of the complex. It depends on [4Fe-4S] cluster as a cofactor.

The protein resides in the cell membrane. It carries out the reaction a quinone + NADH + 5 H(+)(in) = a quinol + NAD(+) + 4 H(+)(out). In terms of biological role, NDH-1 shuttles electrons from NADH, via FMN and iron-sulfur (Fe-S) centers, to quinones in the respiratory chain. The immediate electron acceptor for the enzyme in this species is believed to be a menaquinone. Couples the redox reaction to proton translocation (for every two electrons transferred, four hydrogen ions are translocated across the cytoplasmic membrane), and thus conserves the redox energy in a proton gradient. In Rubrobacter xylanophilus (strain DSM 9941 / JCM 11954 / NBRC 16129 / PRD-1), this protein is NADH-quinone oxidoreductase subunit B.